We begin with the raw amino-acid sequence, 549 residues long: MKNINPTQTSAWQALQKHYDEMKDVTIAELFANDSDRFAKFSATFDDLMLVDFSKNRITEETLAKLQDLAKLQDLAGAIKSMFSGEKINRTEDRAVLHVALRNRSNTPIIVDGKDVMPEVNAVLEKMKTFSQAIISGQWKGYTGKAITDVVNIGIGGSDLGPFMVTEALRPYKNHLTMHFVSNVDGTHIAEVLKKVNPETTLFLVASKTFTTQETMTNAHSARDWFLKTAGDEKHVAKHFAALSTNAKAVGEFGIDTANMFEFWDWVGGRYSLWSAIGLSIILSVGFDNFVELLSGAHAMDKHFSTTPAEKNLPILLALIGIWYNNFFGAETEAILPYDQYMHRFAAYFQQGNMESNGKYVDRNGNAVDYQTGPIIWGEPGTNGQHAFYQLIHQGTKMVPCDFIAPAITHNPLSDHHQKLLSNFFAQTEALAFGKSREVVEQEYRDQGKDPAQLEHVVPFKVFEGNRPTNSILLREITPFSLGALIALYEHKIFTQGAILNIFTFDQWGVELGKQLANRILPELGDDKAISSHDSSTNGLINRYKAWRA.

Catalysis depends on glutamate 355, which acts as the Proton donor. Residues histidine 386 and lysine 514 contribute to the active site.

This sequence belongs to the GPI family.

It localises to the cytoplasm. The catalysed reaction is alpha-D-glucose 6-phosphate = beta-D-fructose 6-phosphate. Its pathway is carbohydrate biosynthesis; gluconeogenesis. It functions in the pathway carbohydrate degradation; glycolysis; D-glyceraldehyde 3-phosphate and glycerone phosphate from D-glucose: step 2/4. Its function is as follows. Catalyzes the reversible isomerization of glucose-6-phosphate to fructose-6-phosphate. The chain is Glucose-6-phosphate isomerase from Salmonella gallinarum (strain 287/91 / NCTC 13346).